Reading from the N-terminus, the 249-residue chain is Probable transcriptional regulatory protein A1S_1496 (249 aa).

This sequence belongs to the TACO1 family.

The protein localises to the cytoplasm. The polypeptide is Probable transcriptional regulatory protein A1S_1496 (Acinetobacter baumannii (strain ATCC 17978 / DSM 105126 / CIP 53.77 / LMG 1025 / NCDC KC755 / 5377)).